We begin with the raw amino-acid sequence, 601 residues long: Terpinolene synthase, chloroplastic (601 aa).

A chloroplast-targeting transit peptide spans 1–32 (MSTFVISNSMHVGISFSFLHKLPQTPPPQVVC). 5 residues coordinate Mg(2+): Asp-354, Asp-358, Asp-498, Thr-502, and Glu-506. A DDXXD motif motif is present at residues 354–358 (DDVYD).

Belongs to the terpene synthase family. Tpsd subfamily. It depends on Mg(2+) as a cofactor. Mn(2+) serves as cofactor.

The protein localises to the plastid. It localises to the chloroplast. It catalyses the reaction (2E)-geranyl diphosphate = terpinolene + diphosphate. It participates in secondary metabolite biosynthesis; terpenoid biosynthesis. In terms of biological role, monoterpene synthase that catalyzes the formation of terpinolene and other monoterpenes from geranyl diphosphate. The chain is Terpinolene synthase, chloroplastic (TES) from Ocimum basilicum (Sweet basil).